The primary structure comprises 366 residues: C-X-C chemokine receptor type 3 (366 aa).

The Extracellular portion of the chain corresponds to 1–55 (MVPEMSERQEFQASEFAYLLENSSYDYGENETYFCCTSPPCPQDFSLNFDRTFLP). Asn-22 carries an N-linked (GlcNAc...) asparagine glycan. Tyr-25 and Tyr-27 each carry sulfotyrosine. Residue Asn-30 is glycosylated (N-linked (GlcNAc...) asparagine). A helical transmembrane segment spans residues 56 to 76 (VLYSLLFVLGLLGNGVVAVVL). At 77 to 88 (LSQRAALSSTDT) the chain is on the cytoplasmic side. A helical transmembrane segment spans residues 89–109 (FLLHLAVADALLVLTLPLWAV). At 110–124 (DAAIQWVFGSGLCKV) the chain is on the extracellular side. A disulfide bridge links Cys-122 with Cys-201. The helical transmembrane segment at 125 to 145 (AGALFNINFYAGALLLACISF) threads the bilayer. The Cytoplasmic segment spans residues 146-167 (DRYLSIVHATQFYRRGPPARVA). The helical transmembrane segment at 168 to 188 (LTCVAVWGLCLLFALPDFIFL) threads the bilayer. At 189-221 (SSHHDNRLNATHCQYNFPQEGRTALRVLQLVAG) the chain is on the extracellular side. Residue Asn-197 is glycosylated (N-linked (GlcNAc...) asparagine). The helical transmembrane segment at 222 to 242 (FLLPLLVMAYCYARILTVLLV) threads the bilayer. Topologically, residues 243–254 (SRGQRRLRAMRL) are cytoplasmic. A helical transmembrane segment spans residues 255–275 (VVVVVVAFALCWTPYHLVVLV). At 276–299 (DTLMDLGALARNCGRESRVDVAKS) the chain is on the extracellular side. The helical transmembrane segment at 300 to 320 (VTSGMGYMHCCLNPLLYAFVG) threads the bilayer. Over 321 to 366 (VKFRERMWVLLMRLGCPDQRGHQRQPSASRRDSSWSETTEASYSGL) the chain is Cytoplasmic. The tract at residues 339–366 (QRGHQRQPSASRRDSSWSETTEASYSGL) is disordered. Polar residues predominate over residues 355–366 (WSETTEASYSGL).

This sequence belongs to the G-protein coupled receptor 1 family. Homomer. Forms heteromers with ACKR4. Interacts with PF4/CXCL4. In terms of processing, sulfation on Tyr-25 and Tyr-27 is essential for CXCL10 binding. Post-translationally, N-glycosylated.

It is found in the cell membrane. Functionally, receptor for the C-X-C chemokine CXCL9, CXCL10 and CXCL11 and mediates the proliferation, survival and angiogenic activity of mesangial cells through a heterotrimeric G-protein signaling pathway. Probably promotes cell chemotaxis response. Binds to CCL21. Upon activation by PF4, induces activated T-lymphocytes migration mediated via downstream Ras/extracellular signal-regulated kinase (ERK) signaling. The protein is C-X-C chemokine receptor type 3 (CXCR3) of Capra hircus (Goat).